Consider the following 1951-residue polypeptide: Sodium channel protein type 3 subunit alpha (1951 aa).

Over 1–128 the chain is Cytoplasmic; sequence MAQALLVPPG…KIAIKILVHS (128 aa). Residues 28 to 60 are disordered; that stretch reads RAAEEKAKKPKKEQDIDDENKPKPNSDLEAGKN. Positions 46–57 are enriched in basic and acidic residues; sequence ENKPKPNSDLEA. Residues 110–455 form an I repeat; it reads ILTPLNPVRK…QQMLEQLKKQ (346 aa). The helical transmembrane segment at 129-146 threads the bilayer; that stretch reads LFSMLIMCTILTNCVFMT. Residues 147–152 lie on the Extracellular side of the membrane; the sequence is LSNPPD. The helical transmembrane segment at 153–174 threads the bilayer; that stretch reads WTKNVEYTFTGIYTFESLIKIL. Over 175–188 the chain is Cytoplasmic; it reads ARGFCLEDFTFLRD. Residues 189–206 form a helical membrane-spanning segment; sequence PWNWLDFSVIVMAYVTEF. The Extracellular segment spans residues 207-213; the sequence is VDLGNVS. The N-linked (GlcNAc...) asparagine glycan is linked to Asn211. Residues 214–235 traverse the membrane as a helical segment; it reads ALRTFRVLRALKTISVIPGLKT. Topologically, residues 236–249 are cytoplasmic; that stretch reads IVGALIQSVKKLSD. Residues 250–269 traverse the membrane as a helical segment; the sequence is VMILTVFCLSVFALIGLQLF. Residues 270–369 lie on the Extracellular side of the membrane; that stretch reads MGNLRNKCSQ…NYGYTSFDTF (100 aa). Asn290, Asn296, Asn302, Asn307, and Asn339 each carry an N-linked (GlcNAc...) asparagine glycan. The segment at residues 370–386 is an intramembrane region (pore-forming); that stretch reads SWAFLSLFRLMTQDYWE. The Extracellular portion of the chain corresponds to 387–397; it reads NLYQLTLRAAG. Residues 398 to 424 traverse the membrane as a helical segment; the sequence is KTYMIFFVLVIFLGSFYLVNLILAVVA. Residues 425–712 lie on the Cytoplasmic side of the membrane; sequence MAYEEQNQAT…LVNLIVMDPF (288 aa). Ser484, Ser485, and Ser486 each carry phosphoserine. 2 disordered regions span residues 493–529 and 587–633; these read SKSAKEWRNRRKKRRQREHLEGNHRADGDRFPKSESE and VGSE…TEVR. The span at 500-509 shows a compositional bias: basic residues; it reads RNRRKKRRQR. Composition is skewed to basic and acidic residues over residues 510-529 and 596-622; these read EHLEGNHRADGDRFPKSESE and DEHSTFEDSESRRDSLFVPHRPGERRN. An II repeat occupies 693–965; sequence CCDAWLKVKH…QIAVGRMQKG (273 aa). A helical membrane pass occupies residues 713–730; the sequence is VDLAITICIVLNTLFMAM. At 731–738 the chain is on the extracellular side; the sequence is EHYPMTQQ. A helical transmembrane segment spans residues 739–763; sequence FSSVLTVGNLVFTGIFTAEMVLKII. The Cytoplasmic segment spans residues 764 to 773; sequence AMDPYYYFQE. The chain crosses the membrane as a helical span at residues 774–793; it reads GWNIFDGIIVSLSLMELGLA. Residues 794-797 are Extracellular-facing; it reads NVEG. Residues 798 to 816 form a helical membrane-spanning segment; it reads LSVLRSFRLLRVFKLAKSW. Residues 817-834 are Cytoplasmic-facing; the sequence is PTLNMLIKIIGNSVGALG. Residues 835 to 855 form a helical membrane-spanning segment; the sequence is NLTLVLAIIVFIFAVVGMQLF. Topologically, residues 856–880 are extracellular; it reads GKSYKECVCKINVDCKLPRWHMNDF. Cys864 and Cys870 are joined by a disulfide. The segment at residues 881 to 896 is an intramembrane region (pore-forming); sequence FHSFLIVFRVLCGEWI. Topologically, residues 897 to 907 are extracellular; the sequence is ETMWDCMEVAG. A disulfide bond links Cys902 and Cys911. A helical transmembrane segment spans residues 908–934; sequence QTMCLIVFMLVMVIGNLVVLNLFLALL. Residues 935 to 1156 are Cytoplasmic-facing; it reads LSSFSSDNLA…RKTCYSIVEH (222 aa). Positions 1068-1112 are disordered; the sequence is TEEFSSESELEESKEKLNATSSSEGSTVDVAPPREGEQAEIEPEE. The III repeat unit spans residues 1139–1450; that stretch reads KGKIWWNLRK…KKYYNAMKKL (312 aa). The helical transmembrane segment at 1157–1177 threads the bilayer; it reads NWFETFIVFMILLSSGALAFE. At 1178 to 1189 the chain is on the extracellular side; it reads DIYIEQRKTIKT. The helical transmembrane segment at 1190-1211 threads the bilayer; the sequence is MLEYADKVFTYIFILEMLLKWV. Residues 1212–1217 lie on the Cytoplasmic side of the membrane; the sequence is AYGFQT. The helical transmembrane segment at 1218-1243 threads the bilayer; sequence YFTNAWCWLDFLIVDVSLVSLVANAL. Topologically, residues 1244 to 1252 are extracellular; the sequence is GYSELGAIK. A helical transmembrane segment spans residues 1253–1271; sequence SLRTLRALRPLRALSRFEG. The Cytoplasmic portion of the chain corresponds to 1272 to 1284; the sequence is MRVVVNALVGAIP. Residues 1285 to 1307 form a helical membrane-spanning segment; sequence SIMNVLLVCLIFWLIFSIMGVNL. Residues 1308–1353 lie on the Extracellular side of the membrane; sequence FAGKFYHCVNTTTGNMFEIKEVNNFSDCQALGKQARWKNVKVNFDN. A disulfide bridge connects residues Cys1315 and Cys1335. N-linked (GlcNAc...) asparagine glycans are attached at residues Asn1317 and Asn1331. Positions 1354–1370 form an intramembrane region, pore-forming; the sequence is VGAGYLALLQVATFKGW. Topologically, residues 1371–1393 are extracellular; the sequence is MDIMYAAVDSRDVKLQPIYEENL. A helical transmembrane segment spans residues 1394-1419; that stretch reads YMYLYFVIFIIFGSFFTLNLFIGVII. Residues 1420 to 1477 lie on the Cytoplasmic side of the membrane; it reads DNFNQQKKKFGGQDIFMTEEQKKYYNAMKKLGSKKPQKPIPRPANKFQGMVFDFVTRQ. At Ser1452 the chain carries Phosphoserine; by PKC. Residues 1459 to 1757 form an IV repeat; sequence IPRPANKFQG…WEKFDPDATQ (299 aa). A helical transmembrane segment spans residues 1478–1496; the sequence is VFDISIMILICLNMVTMMV. The Extracellular segment spans residues 1497–1504; it reads ETDDQSKY. Residues 1505 to 1528 traverse the membrane as a helical segment; it reads MTLVLSRINLVFIVLFTGEFLLKL. Residues 1529 to 1538 are Cytoplasmic-facing; it reads ISLRYYYFTI. A helical membrane pass occupies residues 1539–1556; sequence GWNIFDFVVVILSIVGMF. Residues 1557–1568 lie on the Extracellular side of the membrane; sequence LAELIEKYFVSP. Residues 1569–1591 form a helical membrane-spanning segment; the sequence is TLFRVIRLARIGRILRLIKGAKG. Over 1592–1604 the chain is Cytoplasmic; sequence IRTLLFALMMSLP. The chain crosses the membrane as a helical span at residues 1605–1628; sequence ALFNIGLLLFLVMFIYAIFGMSNF. Residues 1629–1650 lie on the Extracellular side of the membrane; the sequence is AYVKKEAGIDDMFNFETFGNSM. Positions 1651–1663 form an intramembrane region, pore-forming; sequence ICLFQITTSAGWD. Residues 1664–1695 lie on the Extracellular side of the membrane; the sequence is GLLAPILNSAPPDCDPDAIHPGSSVKGDCGNP. The helical transmembrane segment at 1696 to 1721 threads the bilayer; that stretch reads SVGIFFFVSYIIISFLVVVNMYIAVI. The Cytoplasmic portion of the chain corresponds to 1722-1951; the sequence is LENFSVATEE…KGKEVRENQK (230 aa). Residues 1851–1880 form the IQ domain; the sequence is EEVSAAIIQRNYRCYLLKQRLKNISSKYDK. Residues 1898-1951 form a disordered region; that stretch reads DKLNGNSTPEKTDGSSSTTSPPSYDSVTKPDKEKFEKDKPEKEIKGKEVRENQK. Residues 1925–1951 show a composition bias toward basic and acidic residues; it reads TKPDKEKFEKDKPEKEIKGKEVRENQK.

It belongs to the sodium channel (TC 1.A.1.10) family. Nav1.3/SCN3A subfamily. Heterooligomer of an alpha subunit, SCN3A, and 1 to 3 regulatory beta subunits including SCN1B and SCN2B; disulfide-linked with some beta subunits like SCN2B. Interacts with NEDD4L; could regulate expression of SCN3A at the plasma membrane through ubiquitination-regulated endocytosis. Interacts with the conotoxin GVIIJ. Interacts with the spider beta/delta-theraphotoxin-Pre1a. Interacts with the spider RTX-VII toxin (AC P0DL75). In terms of processing, may be ubiquitinated by NEDD4L; which would promote its endocytosis. Post-translationally, phosphorylation at Ser-1452 by PKC in a highly conserved cytoplasmic loop slows inactivation of the sodium channel and reduces peak sodium currents.

The protein localises to the cell membrane. The protein resides in the basal cell membrane. The enzyme catalyses Na(+)(in) = Na(+)(out). Pore-forming subunit of Nav1.3, a voltage-gated sodium (Nav) channel that directly mediates the depolarizing phase of action potentials in excitable membranes. Navs, also called VGSCs (voltage-gated sodium channels) or VDSCs (voltage-dependent sodium channels), operate by switching between closed and open conformations depending on the voltage difference across the membrane. In the open conformation they allow Na(+) ions to selectively pass through the pore, along their electrochemical gradient. The influx of Na+ ions provokes membrane depolarization, initiating the propagation of electrical signals throughout cells and tissues. In some secretory cell types, it also participates in cell excitability through membrane depolarization and regulates cells responsiveness to stimuli triggering secretion. For instance, it controls the release of serotonin/5-hydroxytryptamine by enterochromaffin cells and is required for both glucagon- and glucose-induced insulin secretion in pancreatic endocrine cells. The sequence is that of Sodium channel protein type 3 subunit alpha from Rattus norvegicus (Rat).